Here is a 210-residue protein sequence, read N- to C-terminus: Probable glutathione peroxidase 8 (210 aa).

A helical transmembrane segment spans residues 21 to 40 (VLLSMTVGVGCLLLLQTQLL).

This sequence belongs to the glutathione peroxidase family.

It is found in the membrane. The catalysed reaction is 2 glutathione + H2O2 = glutathione disulfide + 2 H2O. The polypeptide is Probable glutathione peroxidase 8 (gpx8) (Tetraodon nigroviridis (Spotted green pufferfish)).